Here is a 220-residue protein sequence, read N- to C-terminus: Protein GrpE (220 aa).

Residues M1–E55 form a disordered region.

The protein belongs to the GrpE family. Homodimer.

The protein resides in the cytoplasm. In terms of biological role, participates actively in the response to hyperosmotic and heat shock by preventing the aggregation of stress-denatured proteins, in association with DnaK and GrpE. It is the nucleotide exchange factor for DnaK and may function as a thermosensor. Unfolded proteins bind initially to DnaJ; upon interaction with the DnaJ-bound protein, DnaK hydrolyzes its bound ATP, resulting in the formation of a stable complex. GrpE releases ADP from DnaK; ATP binding to DnaK triggers the release of the substrate protein, thus completing the reaction cycle. Several rounds of ATP-dependent interactions between DnaJ, DnaK and GrpE are required for fully efficient folding. This is Protein GrpE from Treponema pallidum (strain Nichols).